The chain runs to 108 residues: Parvalbumin beta 1 (108 aa).

A1 bears the N-acetylalanine mark. 2 consecutive EF-hand domains span residues 38 to 73 (KXXD…FCPK) and 77 to 108 (LTDA…LVKQ). D51, D53, S55, F57, E59, E62, D90, D92, D94, M96, and E101 together coordinate Ca(2+).

Belongs to the parvalbumin family.

Functionally, in muscle, parvalbumin is thought to be involved in relaxation after contraction. It binds two calcium ions. In Oncorhynchus mykiss (Rainbow trout), this protein is Parvalbumin beta 1.